The primary structure comprises 745 residues: Double-stranded RNA-specific editase B2 (745 aa).

2 disordered regions span residues 1–35 and 50–104; these read MASV…RKDK and SPGT…PLEE. Residues 20 to 34 show a composition bias toward basic residues; the sequence is CKSKRRRRRRSKRKD. Positions 23–35 are R-domain (ssRNA-binding); the sequence is KRRRRRRSKRKDK. DRBM domains are found at residues 125-191 and 283-347; these read TPKN…SFVQ and NPVV…ALFD. Residues 414–741 enclose the A to I editase domain; it reads VLSSGTKCIS…VRKPPEQDQF (328 aa). Zn(2+) is bound at residue His438. Catalysis depends on Glu440, which acts as the Proton donor. Positions 496 and 561 each coordinate Zn(2+).

Brain specific.

It is found in the nucleus. In terms of biological role, lacks editing activity. It prevents the binding of other ADAR enzymes to targets in vitro, and decreases the efficiency of these enzymes. Capable of binding to dsRNA but also to ssRNA. The sequence is that of Double-stranded RNA-specific editase B2 (Adarb2) from Mus musculus (Mouse).